The following is a 421-amino-acid chain: Solute carrier family 35 member F3 (421 aa).

The segment at Glu25–Val45 is disordered. The next 10 helical transmembrane spans lie at Ile66–Leu86, Phe98–Gly118, Val149–Leu169, Asp179–Leu199, Ile208–His228, Val232–Phe252, Leu266–Leu286, Leu305–Val325, Thr326–Asp346, and Ile352–Leu372. The interval Lys393–Arg421 is disordered. Over residues Lys411–Arg421 the composition is skewed to basic residues.

Belongs to the SLC35F solute transporter family. As to expression, expressed at the highest levels in the adult cerebellum.

It is found in the membrane. The enzyme catalyses thiamine(in) = thiamine(out). In terms of biological role, mediates thiamine transport. The sequence is that of Solute carrier family 35 member F3 from Homo sapiens (Human).